A 227-amino-acid polypeptide reads, in one-letter code: 2,3-bisphosphoglycerate-dependent phosphoglycerate mutase (227 aa).

Substrate contacts are provided by residues 8-15 (RHGKSVWN), 21-22 (TG), Arg58, 110-113 (ERMY), Lys121, 137-138 (RR), and 181-182 (GN). His9 functions as the Tele-phosphohistidine intermediate in the catalytic mechanism. Glu110 (proton donor/acceptor) is an active-site residue.

Belongs to the phosphoglycerate mutase family. BPG-dependent PGAM subfamily.

It carries out the reaction (2R)-2-phosphoglycerate = (2R)-3-phosphoglycerate. It participates in carbohydrate degradation; glycolysis; pyruvate from D-glyceraldehyde 3-phosphate: step 3/5. Functionally, catalyzes the interconversion of 2-phosphoglycerate and 3-phosphoglycerate. The protein is 2,3-bisphosphoglycerate-dependent phosphoglycerate mutase of Chlamydia caviae (strain ATCC VR-813 / DSM 19441 / 03DC25 / GPIC) (Chlamydophila caviae).